A 234-amino-acid chain; its full sequence is Two-component response regulator ARR9 (234 aa).

A Response regulatory domain is found at 10–147; it reads HVLAVDDSLF…DLNKLKPHMM (138 aa). Residue Asp-80 is modified to 4-aspartylphosphate.

It belongs to the ARR family. Type-A subfamily. In terms of assembly, interacts with AHP1 and AHP3. In terms of processing, two-component system major event consists of a His-to-Asp phosphorelay between a sensor histidine kinase (HK) and a response regulator (RR). In plants, the His-to-Asp phosphorelay involves an additional intermediate named Histidine-containing phosphotransfer protein (HPt). This multistep phosphorelay consists of a His-Asp-His-Asp sequential transfer of a phosphate group between first a His and an Asp of the HK protein, followed by the transfer to a conserved His of the HPt protein and finally the transfer to an Asp in the receiver domain of the RR protein. In terms of tissue distribution, predominantly expressed in roots.

The protein localises to the nucleus. Its function is as follows. Functions as a response regulator involved in His-to-Asp phosphorelay signal transduction system. Phosphorylation of the Asp residue in the receiver domain activates the ability of the protein to promote the transcription of target genes. Type-A response regulators seem to act as negative regulators of the cytokinin signaling. This Arabidopsis thaliana (Mouse-ear cress) protein is Two-component response regulator ARR9 (ARR9).